Consider the following 80-residue polypeptide: Clavanin-D (80 aa).

A signal peptide spans 1–19; it reads MKTTILILLILGLGINAKS. Positions 20 to 29 are excised as a propeptide; sequence LEERKSEEEK. Phenylalanine 52 is modified (phenylalanine amide). A propeptide spanning residues 54-80 is cleaved from the precursor; it reads DDQQDNGKFYGHYAEDNGKHWYDTGDQ.

As to expression, hemocytes and pharyngeal tissues.

The protein resides in the secreted. In terms of biological role, has antimicrobial activity against E.coli, L.monocytogenes and C.albicans. The chain is Clavanin-D from Styela clava (Sea squirt).